Reading from the N-terminus, the 896-residue chain is MSKLTPMMQQYQSIKNKYKDAILFFRLGDFYEMFNDDAKIAARELDLALTARNKGGGEKAPMAGVPCHSAESYIAKLLEKGYKVAICEQIEDPSEAKGLVSREVVRIITPGTIIENEMLKDKENNYLASAICYKDHLGFSYVDISTGEFYVTQFSQKFSDKVWDELDRIQPREVIICKELEETENFADKKKQMNFVYNYSRIEKVKAAYNFLLEHFKTNSLSGFGCEDKPAAILAAGEIINFLKDTQKRTLEHINRITTYNLTDYMVLDSATRYNLELTSTIRGNKHKGSLLNVLDQTITSMGGRLIKKWINQPLIDRNKIETRLDAVEELVNNYLLLQEIREHLKGIYDLERILGKVSYGSANARDLAALKYSILKLPQIKKDLEQLNTKLFKNMHETFDPLIDLAGLLDRSIVDEPPVSVREGGLIKDGYSSELDELRKARTEGKDWIANLQKTERERTGISSLKVGFNKVFGYYIEITKANLDRVPDNYTRKQTLSNSERFITPELKEKEALVLGAEEKINDLEYKLFVKIRDIVRDNIKRIKKTAAIISKLDVLTSLAQNALERDYNRPRINNDGVIEIIKGRHPVVEDMGKGAFVPNDTYLDLEEERFIIITGPNMSGKSTYMRQVALIVLMAQMGSFVPADKATIGIVDRIFTRVGASDDLTTGQSTFMVEMNEVANIVNNATRNSLIILDEVGRGTSTYDGLSIAWAVSEYINNPDRIGARTLFATHYHELTQLENRPGIKNYNVLVEEDEDGVHFLHKIIPGKASESYGIEVAQLAGLPMEIIIRAQEILAELEKKGKESTKTGKGENKNISHKTESDLINNIHESDKEYLTKRNTNDKVQQLPLFKSEYRVIEKIKNKDIVNMTPMEAINFLFEIQKELKEKGENYA.

ATP is bound at residue 618–625 (GPNMSGKS). Positions 805 to 825 (GKESTKTGKGENKNISHKTES) are enriched in basic and acidic residues. The interval 805-826 (GKESTKTGKGENKNISHKTESD) is disordered.

Belongs to the DNA mismatch repair MutS family.

Its function is as follows. This protein is involved in the repair of mismatches in DNA. It is possible that it carries out the mismatch recognition step. This protein has a weak ATPase activity. The polypeptide is DNA mismatch repair protein MutS (Halothermothrix orenii (strain H 168 / OCM 544 / DSM 9562)).